Reading from the N-terminus, the 166-residue chain is Lipoprotein signal peptidase (166 aa).

The next 3 membrane-spanning stretches (helical) occupy residues 10-30 (LIWL…KAWV), 68-88 (WQLW…AFWL), and 94-114 (GHWR…GNVI). Active-site residues include D124 and D142. The helical transmembrane segment at 138-158 (FNIADSAIVGGAIGIAVFGLF) threads the bilayer.

Belongs to the peptidase A8 family.

The protein resides in the cell inner membrane. The catalysed reaction is Release of signal peptides from bacterial membrane prolipoproteins. Hydrolyzes -Xaa-Yaa-Zaa-|-(S,diacylglyceryl)Cys-, in which Xaa is hydrophobic (preferably Leu), and Yaa (Ala or Ser) and Zaa (Gly or Ala) have small, neutral side chains.. It functions in the pathway protein modification; lipoprotein biosynthesis (signal peptide cleavage). In terms of biological role, this protein specifically catalyzes the removal of signal peptides from prolipoproteins. The chain is Lipoprotein signal peptidase from Xanthomonas oryzae pv. oryzae (strain MAFF 311018).